Reading from the N-terminus, the 53-residue chain is Lantibiotic mutacin-2 (53 aa).

Residues 1–26 (MNKLNSNAVVSLNEVSDSELDTILGG) constitute a propeptide that is removed on maturation. A cross-link (beta-methyllanthionine (Thr-Cys)) is located at residues 36-41 (TVSYEC). 2 cross-links (lanthionine (Ser-Cys)) span residues 38–52 (SYEC…VFTC) and 45–53 (SWQHVFTCC). T51 bears the 2,3-didehydrobutyrine mark.

Maturation of lantibiotics involves the enzymatic conversion of Thr, and Ser into dehydrated AA and the formation of thioether bonds with cysteine. This is followed by membrane translocation and cleavage of the modified precursor. Post-translationally, it is not established whether the 2,3-didehydrobutyrine is the E- or Z-isomer.

In terms of biological role, lanthionine-containing peptide antibiotic (lantibiotic) active on Gram-positive bacteria including M.luteus, S.aureus, Streptococcus, P.micros, P.acidilactici, C.sporogenes, C.diphtheriae, A.viscosus, G.vaginalis, P.acnes, L.monocytogenes and M.smegmatis, and Gram-negative bacteria including C.jejuni, H.pylori and N.gonorrhoeae. Transiently and partially depolarizes the transmembrane electrical potential and pH gradient of susceptible cells, inhibits the uptake of amino acids and depletes the intracellular ATP pool. The chain is Lantibiotic mutacin-2 from Streptococcus mutans.